The sequence spans 316 residues: Adenine deaminase (316 aa).

Zn(2+) is bound by residues histidine 14, histidine 16, and histidine 194. Catalysis depends on glutamate 197, which acts as the Proton donor. Aspartate 275 provides a ligand contact to Zn(2+). Aspartate 276 is a binding site for substrate.

This sequence belongs to the metallo-dependent hydrolases superfamily. Adenosine and AMP deaminases family. Adenine deaminase type 2 subfamily. The cofactor is Zn(2+).

It carries out the reaction adenine + H2O + H(+) = hypoxanthine + NH4(+). Catalyzes the hydrolytic deamination of adenine to hypoxanthine. Plays an important role in the purine salvage pathway and in nitrogen catabolism. The protein is Adenine deaminase of Bordetella avium (strain 197N).